The chain runs to 243 residues: Terpene cyclase dpmaB (243 aa).

Helical transmembrane passes span 11-31 (PGYLEVAWIADTCKLLMGLGW), 51-71 (ALMPLCCNFAWELTYAVIYPF), 112-132 (LPFIFIICIAAWTTAHLALAL), 141-161 (AFSAYGCQLLLSVGALCQLLS), 169-189 (SYFLWFCRFFGSLVLIPQDVL), and 207-227 (IWFVSIFLLLDGSYALCLWYV).

Belongs to the paxB family.

The protein localises to the membrane. The protein operates within secondary metabolite biosynthesis; terpenoid biosynthesis. Its function is as follows. Terpene cyclase; part of the gene cluster that mediates the biosynthesis of the diterpenoid pyrones subglutinols A and B. The first step of the pathway is the synthesis of the alpha-pyrone moiety by the polyketide synthase dpmaA via condensation of one acetyl-CoA starter unit with 3 malonyl-CoA units and 2 methylations. The alpha-pyrone is then combined with geranylgeranyl pyrophosphate (GGPP) formed by the GGPP synthase dpmaD through the action of the prenyltransferase dpmaC to yield a linear alpha-pyrone diterpenoid. Subsequent steps in the diterpenoid pyrone biosynthetic pathway involve the decalin core formation, which is initiated by the epoxidation of the C10-C11 olefin by the FAD-dependent oxidoreductase dpmaE, and is followed by a cyclization cascade catalyzed by the terpene cyclase dpmaB. The dehydrogenase dpmaF is then involved in tetrahydrofuran (THF) ring formation at the C5 unit to complete the formation of subglutinols A and B. The chain is Terpene cyclase dpmaB from Metarhizium anisopliae (Entomophthora anisopliae).